Reading from the N-terminus, the 458-residue chain is Monomethylamine methyltransferase MtmB2 (458 aa).

Position 202 (pyrrolysine 202) is a non-standard amino acid, pyrrolysine.

This sequence belongs to the monomethylamine methyltransferase family. In terms of assembly, can form a complex with MtmC.

It catalyses the reaction Co(I)-[methylamine-specific corrinoid protein] + methylamine + H(+) = methyl-Co(III)-[methylamine-specific corrinoid protein] + NH4(+). Its pathway is one-carbon metabolism; methanogenesis from methylamine. Catalyzes the transfer of the methyl group from monomethylamine to the corrinoid cofactor of MtmC. The chain is Monomethylamine methyltransferase MtmB2 (mtmB2) from Methanosarcina acetivorans (strain ATCC 35395 / DSM 2834 / JCM 12185 / C2A).